A 430-amino-acid chain; its full sequence is ETS domain-containing protein Elk-4 (430 aa).

Positions isoleucine 5–valine 85 form a DNA-binding region, ETS. Over residues serine 116 to proline 127 the composition is skewed to basic and acidic residues. The tract at residues serine 116–asparagine 138 is disordered. Lysine 166 participates in a covalent cross-link: Glycyl lysine isopeptide (Lys-Gly) (interchain with G-Cter in SUMO2). Disordered regions lie at residues threonine 245–threonine 279 and proline 292–glutamate 325. Residues proline 249–serine 272 show a composition bias toward pro residues. Residues proline 299 to threonine 312 are compositionally biased toward basic and acidic residues.

The protein belongs to the ETS family. In terms of assembly, interacts with SIRT7. In terms of tissue distribution, lung and liver.

It localises to the nucleus. Its function is as follows. Involved in both transcriptional activation and repression. Interaction with SIRT7 leads to recruitment and stabilization of SIRT7 at promoters, followed by deacetylation of histone H3 at 'Lys-18' (H3K18Ac) and subsequent transcription repression. Forms a ternary complex with the serum response factor (SRF). Requires DNA-bound SRF for ternary complex formation and makes extensive DNA contacts to the 5'side of SRF, but does not bind DNA autonomously. This Mus musculus (Mouse) protein is ETS domain-containing protein Elk-4 (Elk4).